The sequence spans 534 residues: Probable bifunctional tRNA threonylcarbamoyladenosine biosynthesis protein (534 aa).

The kae1 stretch occupies residues 1–325; it reads MLCLGIEGTA…YRTDEVDVPW (325 aa). The Fe cation site is built by histidine 108, histidine 112, and tyrosine 129. L-threonylcarbamoyladenylate is bound by residues 129 to 133, aspartate 161, glycine 174, glutamate 178, and asparagine 258; that span reads YVSGG. Aspartate 286 provides a ligand contact to Fe cation. In terms of domain architecture, Protein kinase spans 335–534; that stretch reads LPPDILAKGA…EIESRGRYTD (200 aa). Residues 340 to 348 and lysine 361 contribute to the ATP site; that span reads LAKGAEANI. Aspartate 451 (proton acceptor; for kinase activity) is an active-site residue.

In the N-terminal section; belongs to the KAE1 / TsaD family. The protein in the C-terminal section; belongs to the protein kinase superfamily. Tyr protein kinase family. BUD32 subfamily. Component of the KEOPS complex that consists of Kae1, Bud32, Cgi121 and Pcc1; the whole complex dimerizes. It depends on Fe(2+) as a cofactor.

The protein localises to the cytoplasm. The enzyme catalyses L-seryl-[protein] + ATP = O-phospho-L-seryl-[protein] + ADP + H(+). It catalyses the reaction L-threonyl-[protein] + ATP = O-phospho-L-threonyl-[protein] + ADP + H(+). It carries out the reaction L-threonylcarbamoyladenylate + adenosine(37) in tRNA = N(6)-L-threonylcarbamoyladenosine(37) in tRNA + AMP + H(+). In terms of biological role, required for the formation of a threonylcarbamoyl group on adenosine at position 37 (t(6)A37) in tRNAs that read codons beginning with adenine. Is a component of the KEOPS complex that is probably involved in the transfer of the threonylcarbamoyl moiety of threonylcarbamoyl-AMP (TC-AMP) to the N6 group of A37. The Kae1 domain likely plays a direct catalytic role in this reaction. The Bud32 domain probably displays kinase activity that regulates Kae1 function. In Methanothermobacter thermautotrophicus (strain ATCC 29096 / DSM 1053 / JCM 10044 / NBRC 100330 / Delta H) (Methanobacterium thermoautotrophicum), this protein is Probable bifunctional tRNA threonylcarbamoyladenosine biosynthesis protein.